An 85-amino-acid chain; its full sequence is Large ribosomal subunit protein bL27 (85 aa).

The segment at 1 to 25 (MAHKKAGSSSKNGRDSNPQYLGVKR) is disordered. The span at 7–19 (GSSSKNGRDSNPQ) shows a compositional bias: polar residues.

It belongs to the bacterial ribosomal protein bL27 family.

In Micrococcus luteus (strain ATCC 4698 / DSM 20030 / JCM 1464 / CCM 169 / CCUG 5858 / IAM 1056 / NBRC 3333 / NCIMB 9278 / NCTC 2665 / VKM Ac-2230) (Micrococcus lysodeikticus), this protein is Large ribosomal subunit protein bL27.